The sequence spans 38 residues: Large ribosomal subunit protein bL36 (38 aa).

The protein belongs to the bacterial ribosomal protein bL36 family.

This is Large ribosomal subunit protein bL36 from Acinetobacter baylyi (strain ATCC 33305 / BD413 / ADP1).